The primary structure comprises 148 residues: Probable transcriptional regulator SyrB (148 aa).

The tract at residues 1–58 (MADESNTGPVAAAEAVAETQAPAGKRKSSSRRQRTAAGQVAESKTTAKPKRYSETERA) is disordered. Residues 7 to 23 (TGPVAAAEAVAETQAPA) show a composition bias toward low complexity. The segment covering 24–34 (GKRKSSSRRQR) has biased composition (basic residues).

Belongs to the SyrB family.

Responsible for the repression of SyrM activity. The protein is Probable transcriptional regulator SyrB (syrB) of Sinorhizobium fredii (strain NBRC 101917 / NGR234).